The chain runs to 430 residues: Adenylosuccinate synthetase (430 aa).

GTP contacts are provided by residues 12-18 (GDEGKGK) and 40-42 (GHT). Catalysis depends on aspartate 13, which acts as the Proton acceptor. Aspartate 13 and glycine 40 together coordinate Mg(2+). Residues 13 to 16 (DEGK), 38 to 41 (NAGH), threonine 130, arginine 144, glutamine 224, threonine 239, and arginine 303 contribute to the IMP site. Histidine 41 (proton donor) is an active-site residue. Substrate is bound at residue 299-305 (TVTGRKR). GTP is bound by residues arginine 305, 331 to 333 (KLD), and 413 to 415 (STS).

It belongs to the adenylosuccinate synthetase family. In terms of assembly, homodimer. The cofactor is Mg(2+).

The protein resides in the cytoplasm. It carries out the reaction IMP + L-aspartate + GTP = N(6)-(1,2-dicarboxyethyl)-AMP + GDP + phosphate + 2 H(+). Its pathway is purine metabolism; AMP biosynthesis via de novo pathway; AMP from IMP: step 1/2. In terms of biological role, plays an important role in the de novo pathway of purine nucleotide biosynthesis. Catalyzes the first committed step in the biosynthesis of AMP from IMP. This chain is Adenylosuccinate synthetase, found in Cereibacter sphaeroides (strain ATCC 17025 / ATH 2.4.3) (Rhodobacter sphaeroides).